Reading from the N-terminus, the 229-residue chain is General odorant-binding protein 69 (229 aa).

An N-terminal signal peptide occupies residues 1 to 20; sequence MDRLLLVLLSSASLLLTVYG. A disulfide bridge connects residues Cys-66 and Cys-106.

Belongs to the PBP/GOBP family.

It localises to the secreted. Functionally, present in the aqueous fluid surrounding olfactory sensory dendrites and are thought to aid in the capture and transport of hydrophobic odorants into and through this fluid. In Anopheles gambiae (African malaria mosquito), this protein is General odorant-binding protein 69 (Obp69).